Consider the following 518-residue polypeptide: Ribonuclease Y (518 aa).

Residues 2–22 (GSIIISALLALVIGAVVGFFV) traverse the membrane as a helical segment. The region spanning 208–271 (TVSVVNLPND…ETARIALDKL (64 aa)) is the KH domain. The 94-residue stretch at 334–427 (VLKHSVEVAF…VAAADALSAA (94 aa)) folds into the HD domain.

The protein belongs to the RNase Y family.

Its subcellular location is the cell membrane. In terms of biological role, endoribonuclease that initiates mRNA decay. This chain is Ribonuclease Y, found in Geobacillus thermodenitrificans (strain NG80-2).